The following is a 521-amino-acid chain: DNA damage-binding protein cmr1 (521 aa).

The segment at 36-75 (DKIIPKPAPPKPKRASTPRVKREPVKKEAARPTRQSSRLA) is disordered. A compositionally biased stretch (basic and acidic residues) spans 55–66 (VKREPVKKEAAR). WD repeat units follow at residues 183–224 (IVPQ…PKIE), 242–282 (THSR…STEI), 333–373 (LTDH…GKGD), 382–422 (EHES…EWKA), and 490–521 (DGIT…CLWM).

It belongs to the WD repeat DDB2/WDR76 family.

DNA-binding protein that binds to both single- and double-stranded DNA. Binds preferentially to UV-damaged DNA. May be involved in DNA-metabolic processes. The chain is DNA damage-binding protein cmr1 from Neurospora crassa (strain ATCC 24698 / 74-OR23-1A / CBS 708.71 / DSM 1257 / FGSC 987).